The chain runs to 295 residues: Shikimate dehydrogenase (NADP(+)) (295 aa).

Shikimate contacts are provided by residues 24–26 (SRS) and T71. K75 functions as the Proton acceptor in the catalytic mechanism. E87 serves as a coordination point for NADP(+). Shikimate is bound by residues N96 and D111. NADP(+) contacts are provided by residues 136 to 140 (GAGGA), 160 to 165 (NRTASR), and M233. Y235 contributes to the shikimate binding site. G256 contributes to the NADP(+) binding site.

The protein belongs to the shikimate dehydrogenase family. In terms of assembly, homodimer.

The catalysed reaction is shikimate + NADP(+) = 3-dehydroshikimate + NADPH + H(+). The protein operates within metabolic intermediate biosynthesis; chorismate biosynthesis; chorismate from D-erythrose 4-phosphate and phosphoenolpyruvate: step 4/7. In terms of biological role, involved in the biosynthesis of the chorismate, which leads to the biosynthesis of aromatic amino acids. Catalyzes the reversible NADPH linked reduction of 3-dehydroshikimate (DHSA) to yield shikimate (SA). The sequence is that of Shikimate dehydrogenase (NADP(+)) from Cupriavidus taiwanensis (strain DSM 17343 / BCRC 17206 / CCUG 44338 / CIP 107171 / LMG 19424 / R1) (Ralstonia taiwanensis (strain LMG 19424)).